Reading from the N-terminus, the 435-residue chain is Tektin-4 (435 aa).

Over residues 60–69 (DQSERQRHES) the composition is skewed to basic and acidic residues. Positions 60–96 (DQSERQRHESQQLATETQALAQRTQQDSTRTVGERLQ) are disordered. The span at 70–85 (QQLATETQALAQRTQQ) shows a compositional bias: low complexity. Coiled coils occupy residues 102 to 180 (KSEL…LLKR), 310 to 336 (LHKT…DKEA), and 363 to 411 (FRLL…TNSL).

The protein belongs to the tektin family. As to quaternary structure, microtubule inner protein component of sperm flagellar doublet microtubules. Ubiquitinated, leading to its degradation. Deubiquitinated by USP16, promoting its stability. In terms of tissue distribution, strongly expressed in spermatozoa. Also detected at low levels in pancreas. Expressed in airway epithelial cells.

The protein resides in the cytoplasm. It localises to the cytoskeleton. Its subcellular location is the cilium axoneme. The protein localises to the flagellum axoneme. Microtubule inner protein (MIP) part of the dynein-decorated doublet microtubules (DMTs) in cilia and flagellar axoneme. Forms filamentous polymers in the walls of ciliary and flagellar microtubules. Contributes to normal sperm motility. In Homo sapiens (Human), this protein is Tektin-4.